The chain runs to 463 residues: L-seryl-tRNA(Sec) selenium transferase (463 aa).

The residue at position 295 (K295) is an N6-(pyridoxal phosphate)lysine.

It belongs to the SelA family. Homodecamer; pentamer of dimers. Binds only one seryl-tRNA(Sec) per dimer. Pyridoxal 5'-phosphate is required as a cofactor.

It is found in the cytoplasm. It carries out the reaction L-seryl-tRNA(Sec) + selenophosphate + H(+) = L-selenocysteinyl-tRNA(Sec) + phosphate. It functions in the pathway aminoacyl-tRNA biosynthesis; selenocysteinyl-tRNA(Sec) biosynthesis; selenocysteinyl-tRNA(Sec) from L-seryl-tRNA(Sec) (bacterial route): step 1/1. In terms of biological role, converts seryl-tRNA(Sec) to selenocysteinyl-tRNA(Sec) required for selenoprotein biosynthesis. The chain is L-seryl-tRNA(Sec) selenium transferase from Salmonella schwarzengrund (strain CVM19633).